The primary structure comprises 337 residues: Glutaredoxin-3 (337 aa).

Ala2 is modified (N-acetylalanine). In terms of domain architecture, Thioredoxin spans Ala2–Ser119. A Phosphoserine modification is found at Ser119. Glutaredoxin domains follow at residues His144–Glu238 and Glu239–Asn337. [2Fe-2S] cluster contacts are provided by Cys161 and Cys263.

As to quaternary structure, homodimer; the homodimer is independent of 2Fe-2S clusters. Heterotrimer; forms a heterotrimeric complex composed by two BOLA2 molecules and one GLRX3 molecule; linked by [2Fe-2S] clusters. Interacts (via N-terminus) with PRKCQ/PKC-theta. Interacts (via C-terminus) with CSRP3. Interacts with CSRP2.

The protein resides in the cytoplasm. Its subcellular location is the cytosol. It localises to the cell cortex. The protein localises to the myofibril. It is found in the sarcomere. The protein resides in the z line. Together with BOLA2, acts as a cytosolic iron-sulfur (Fe-S) cluster assembly factor that facilitates [2Fe-2S] cluster insertion into a subset of cytosolic proteins. Acts as a critical negative regulator of cardiac hypertrophy and a positive inotropic regulator. Required for hemoglobin maturation. Does not possess any thyoredoxin activity since it lacks the conserved motif that is essential for catalytic activity. The sequence is that of Glutaredoxin-3 (Glrx3) from Mus musculus (Mouse).